The sequence spans 311 residues: Malate dehydrogenase (311 aa).

NAD(+) contacts are provided by residues 7–13 (GAAGGIG) and Asp-34. Arg-81 and Arg-87 together coordinate substrate. Residues Asn-94 and 117–119 (ITN) each bind NAD(+). Substrate is bound by residues Asn-119 and Arg-153. The Proton acceptor role is filled by His-177. Met-227 provides a ligand contact to NAD(+).

Belongs to the LDH/MDH superfamily. MDH type 1 family. In terms of assembly, homodimer.

It carries out the reaction (S)-malate + NAD(+) = oxaloacetate + NADH + H(+). Catalyzes the reversible oxidation of malate to oxaloacetate. The chain is Malate dehydrogenase from Erwinia tasmaniensis (strain DSM 17950 / CFBP 7177 / CIP 109463 / NCPPB 4357 / Et1/99).